The primary structure comprises 603 residues: Elongation factor 4 (603 aa).

Residues 7–189 enclose the tr-type G domain; that stretch reads SRIRNFSIIA…SIVHLVPPPE (183 aa). GTP is bound by residues 19–24 and 136–139; these read DHGKST and NKID.

This sequence belongs to the TRAFAC class translation factor GTPase superfamily. Classic translation factor GTPase family. LepA subfamily.

The protein resides in the cell inner membrane. The catalysed reaction is GTP + H2O = GDP + phosphate + H(+). Functionally, required for accurate and efficient protein synthesis under certain stress conditions. May act as a fidelity factor of the translation reaction, by catalyzing a one-codon backward translocation of tRNAs on improperly translocated ribosomes. Back-translocation proceeds from a post-translocation (POST) complex to a pre-translocation (PRE) complex, thus giving elongation factor G a second chance to translocate the tRNAs correctly. Binds to ribosomes in a GTP-dependent manner. The polypeptide is Elongation factor 4 (Acaryochloris marina (strain MBIC 11017)).